The sequence spans 401 residues: Nuclear hormone receptor family member nhr-65 (401 aa).

The segment at residues 10–79 (PERCKVCGDT…AGMSSENFQF (70 aa)) is a DNA-binding region (nuclear receptor). NR C4-type zinc fingers lie at residues 13-33 (CKVCGDTGNGMHFGAFTCRAC) and 49-67 (CENHLIFALKCKNCRLQRC). The NR LBD domain occupies 132-398 (KAEKLIEFGS…FSHPEFIQDA (267 aa)).

Belongs to the nuclear hormone receptor family.

It localises to the nucleus. Functionally, orphan nuclear receptor. This Caenorhabditis elegans protein is Nuclear hormone receptor family member nhr-65 (nhr-65).